A 25-amino-acid chain; its full sequence is Endoglucanase 1 (25 aa).

The tract at residues 1-25 is disordered; the sequence is YDASLKPNLQIPQKNIPNNDAVNIK. Residues 10–25 are compositionally biased toward polar residues; it reads QIPQKNIPNNDAVNIK.

It carries out the reaction Endohydrolysis of (1-&gt;4)-beta-D-glucosidic linkages in cellulose, lichenin and cereal beta-D-glucans.. Functionally, this enzyme hydrolyzes cellotetraose, cellopentaose, and cellohexaose to cellobiose and cellotriose but does not hydrolyze cellobiose or cellotriose. In Ruminiclostridium josui (Clostridium josui), this protein is Endoglucanase 1.